Consider the following 358-residue polypeptide: tRNA-specific 2-thiouridylase MnmA (358 aa).

Residues alanine 6–serine 13 and methionine 32 each bind ATP. The Nucleophile role is filled by cysteine 103. A disulfide bridge connects residues cysteine 103 and cysteine 201. An ATP-binding site is contributed by glycine 127. The tract at residues lysine 151–glutamine 153 is interaction with tRNA. Cysteine 201 functions as the Cysteine persulfide intermediate in the catalytic mechanism.

The protein belongs to the MnmA/TRMU family.

It localises to the cytoplasm. It catalyses the reaction S-sulfanyl-L-cysteinyl-[protein] + uridine(34) in tRNA + AH2 + ATP = 2-thiouridine(34) in tRNA + L-cysteinyl-[protein] + A + AMP + diphosphate + H(+). In terms of biological role, catalyzes the 2-thiolation of uridine at the wobble position (U34) of tRNA, leading to the formation of s(2)U34. This Thermotoga maritima (strain ATCC 43589 / DSM 3109 / JCM 10099 / NBRC 100826 / MSB8) protein is tRNA-specific 2-thiouridylase MnmA.